Here is a 319-residue protein sequence, read N- to C-terminus: Polyprenyl transferase macG (319 aa).

9 consecutive transmembrane segments (helical) span residues Ala28–Met45, Val48–Ala68, Ala106–Gly126, Pro127–Lys147, Phe152–Ile172, Ala182–Thr202, Val224–Leu244, Ser249–Leu269, and Leu289–Ile309.

Belongs to the UbiA prenyltransferase family. The cofactor is Mg(2+).

The protein resides in the membrane. The protein operates within secondary metabolite biosynthesis; terpenoid biosynthesis. Polyprenyl transferase; part of the gene cluster that mediates the biosynthesis of macrophorins, isoprenoid epoxycyclohexenones containing cyclized drimane moieties. The first step of the pathway is the synthesis of 6-methylsalicylic acid (6-MSA) by the polyketide synthase macA. 6-MSA is then converted to m-cresol by the decarboxylase macB. The cytochrome P450 monooxygenase macC then catalyzes the oxidation of m-cresol to toluquinol. Epoxidation of toluquinol is then performed by the short chain dehydrogenase macD, with the help of macE, and a further prenylation by macG leads to 7-deacetoxyyanuthone A. The next step is the hydroxylation of C-22 of 7-deacetoxyyanuthone A by the cytochrome P450 monooxygenase macH to yield 22-deacetylyanuthone A. O-Mevalon transferase macI then attaches mevalon to the hydroxyl group of 22-deacetylyanuthone A to produce yanuthone E. The terpene cyclase macJ catalyzes the cyclization of 22-deacetylyanuthone A to macrophorin A. MacJ is also able to catalyze cyclization of yanuthone E and 7-deacetoxyyanuthone A to their corresponding macrophorins. The macJ products can be further modified by macH and macJ, as well as by the FAD-dependent monooxygenase macF, to produce additional macrophorins, including 4'-oxomacrophorin A, 4'-oxomacrophorin D and 4'-oxomacrophorin E. This chain is Polyprenyl transferase macG, found in Penicillium terrestre.